Consider the following 149-residue polypeptide: Ribonuclease H (149 aa).

The RNase H type-1 domain occupies 1 to 142; that stretch reads MSDSVELFTD…ADQLANRGVD (142 aa). Mg(2+)-binding residues include Asp10, Glu48, Asp70, and Asp134.

It belongs to the RNase H family. Monomer. Mg(2+) serves as cofactor.

Its subcellular location is the cytoplasm. The catalysed reaction is Endonucleolytic cleavage to 5'-phosphomonoester.. Its function is as follows. Endonuclease that specifically degrades the RNA of RNA-DNA hybrids. In Pseudomonas savastanoi pv. phaseolicola (strain 1448A / Race 6) (Pseudomonas syringae pv. phaseolicola (strain 1448A / Race 6)), this protein is Ribonuclease H.